A 776-amino-acid chain; its full sequence is Lysyl oxidase homolog 2 (776 aa).

An N-terminal signal peptide occupies residues 1 to 25 (MEIPFGSCLYSCLALLVLLPSLSLA). 4 consecutive SRCR domains span residues 61–162 (VRLA…VVCS), 191–305 (IRPI…VSCV), 329–428 (VRLR…VRCN), and 438–546 (VRLN…VACS). Disulfide bonds link Cys-87/Cys-151, Cys-100/Cys-161, Cys-131/Cys-141, Cys-221/Cys-294, Cys-234/Cys-304, Cys-268/Cys-278, Cys-354/Cys-417, Cys-367/Cys-427, and Cys-398/Cys-408. The N-linked (GlcNAc...) asparagine glycan is linked to Asn-267. A glycan (N-linked (GlcNAc...) asparagine) is linked at Asn-291. Asn-458 carries an N-linked (GlcNAc...) asparagine glycan. 3 cysteine pairs are disulfide-bonded: Cys-467/Cys-532, Cys-480/Cys-545, and Cys-514/Cys-524. A lysyl-oxidase like region spans residues 550–753 (PDLVLNAEIV…WMYNCHVGGA (204 aa)). Positions 551 and 552 each coordinate Ca(2+). Disulfide bonds link Cys-575–Cys-627, Cys-581–Cys-697, Cys-659–Cys-675, and Cys-665–Cys-687. Cu cation is bound by residues His-628, His-630, and His-632. A glycan (N-linked (GlcNAc...) asparagine) is linked at Asn-646. A cross-link (lysine tyrosylquinone (Lys-Tyr)) is located at residues 655–691 (KASFCLEDTECEGDIQKSYECANFGEQGITMGCWDMY). Tyr-691 carries the 2',4',5'-topaquinone modification. Positions 724, 726, 729, and 730 each coordinate Ca(2+). Cysteines 734 and 748 form a disulfide.

This sequence belongs to the lysyl oxidase family. Component of some chromatin repressor complex. Interacts with SNAI1. Interacts with TAF10. Interacts with HSPA5. Interacts with EFEMP2. Cu cation serves as cofactor. Lysine tyrosylquinone residue is required as a cofactor. In terms of processing, the lysine tyrosylquinone cross-link (LTQ) is generated by condensation of the epsilon-amino group of a lysine with a topaquinone produced by oxidation of tyrosine. Post-translationally, N-glycosylated. N-glycosylation on Asn-458 and Asn-646 may be essential for proper folding and secretion; may be composed of a fucosylated carbohydrates attached to a trimannose N-linked glycan core.

The protein localises to the secreted. Its subcellular location is the extracellular space. The protein resides in the extracellular matrix. It is found in the basement membrane. It localises to the nucleus. The protein localises to the chromosome. Its subcellular location is the endoplasmic reticulum. It carries out the reaction L-lysyl-[protein] + O2 + H2O = (S)-2-amino-6-oxohexanoyl-[protein] + H2O2 + NH4(+). Its activity is regulated as follows. Specifically inhibited by a mouse monoclonal antibody AB0023, inhibition occurs in a non-competitive manner. Functionally, mediates the post-translational oxidative deamination of lysine residues on target proteins leading to the formation of deaminated lysine (allysine). Acts as a transcription corepressor and specifically mediates deamination of trimethylated 'Lys-4' of histone H3 (H3K4me3), a specific tag for epigenetic transcriptional activation. Shows no activity against histone H3 when it is trimethylated on 'Lys-9' (H3K9me3) or 'Lys-27' (H3K27me3) or when 'Lys-4' is monomethylated (H3K4me1) or dimethylated (H3K4me2). Also mediates deamination of methylated TAF10, a member of the transcription factor IID (TFIID) complex, which induces release of TAF10 from promoters, leading to inhibition of TFIID-dependent transcription. LOXL2-mediated deamination of TAF10 results in transcriptional repression of genes required for embryonic stem cell pluripotency including POU5F1/OCT4, NANOG, KLF4 and SOX2. Involved in epithelial to mesenchymal transition (EMT) via interaction with SNAI1 and participates in repression of E-cadherin CDH1, probably by mediating deamination of histone H3. During EMT, involved with SNAI1 in negatively regulating pericentromeric heterochromatin transcription. SNAI1 recruits LOXL2 to pericentromeric regions to oxidize histone H3 and repress transcription which leads to release of heterochromatin component CBX5/HP1A, enabling chromatin reorganization and acquisition of mesenchymal traits. Interacts with the endoplasmic reticulum protein HSPA5 which activates the IRE1-XBP1 pathway of the unfolded protein response, leading to expression of several transcription factors involved in EMT and subsequent EMT induction. When secreted into the extracellular matrix, promotes cross-linking of extracellular matrix proteins by mediating oxidative deamination of peptidyl lysine residues in precursors to fibrous collagen and elastin. Acts as a regulator of sprouting angiogenesis, probably via collagen IV scaffolding. Acts as a regulator of chondrocyte differentiation, probably by regulating expression of factors that control chondrocyte differentiation. The polypeptide is Lysyl oxidase homolog 2 (Loxl2) (Rattus norvegicus (Rat)).